A 204-amino-acid chain; its full sequence is 5'-deoxynucleotidase HDDC2 (204 aa).

Alanine 2 is subject to N-acetylalanine. Residues serine 3 and serine 5 each carry the phosphoserine modification. Positions 46–148 constitute an HD domain; the sequence is VSDHMYRMAV…VKQLDQCEMI (103 aa). Histidine 49, histidine 77, aspartate 78, glutamate 81, aspartate 86, isoleucine 87, and aspartate 143 together coordinate a divalent metal cation. Serine 204 carries the post-translational modification Phosphoserine.

Belongs to the HDDC2 family. In terms of assembly, homodimer. Requires Mn(2+) as cofactor. Co(2+) serves as cofactor. The cofactor is Mg(2+).

The catalysed reaction is a 2'-deoxyribonucleoside 5'-phosphate + H2O = a 2'-deoxyribonucleoside + phosphate. In terms of biological role, catalyzes the dephosphorylation of the nucleoside 5'-monophosphates deoxyadenosine monophosphate (dAMP), deoxycytidine monophosphate (dCMP), deoxyguanosine monophosphate (dGMP) and deoxythymidine monophosphate (dTMP). The chain is 5'-deoxynucleotidase HDDC2 (HDDC2) from Homo sapiens (Human).